An 82-amino-acid polypeptide reads, in one-letter code: Envelope small membrane protein (82 aa).

The Virion surface segment spans residues Met1 to Phe16. A helical transmembrane segment spans residues Phe17–Ile37. Residues Arg38–Pro78 are Intravirion-facing.

Belongs to the betacoronaviruses E protein family. As to quaternary structure, homopentamer. Interacts with membrane protein M in the budding compartment of the host cell, which is located between endoplasmic reticulum and the Golgi complex. Interacts with Nucleoprotein.

The protein localises to the host Golgi apparatus membrane. Its function is as follows. Plays a central role in virus morphogenesis and assembly. Acts as a viroporin and self-assembles in host membranes forming pentameric protein-lipid pores that allow ion transport. Also plays a role in the induction of apoptosis. In Tylonycteris pachypus (Lesser bamboo bat), this protein is Envelope small membrane protein.